The sequence spans 158 residues: Crossover junction endodeoxyribonuclease RuvC (158 aa).

Residues Asp-7, Glu-67, and Asp-139 contribute to the active site. Residues Asp-7, Glu-67, and Asp-139 each contribute to the Mg(2+) site.

Belongs to the RuvC family. Homodimer which binds Holliday junction (HJ) DNA. The HJ becomes 2-fold symmetrical on binding to RuvC with unstacked arms; it has a different conformation from HJ DNA in complex with RuvA. In the full resolvosome a probable DNA-RuvA(4)-RuvB(12)-RuvC(2) complex forms which resolves the HJ. Requires Mg(2+) as cofactor.

It is found in the cytoplasm. It catalyses the reaction Endonucleolytic cleavage at a junction such as a reciprocal single-stranded crossover between two homologous DNA duplexes (Holliday junction).. Functionally, the RuvA-RuvB-RuvC complex processes Holliday junction (HJ) DNA during genetic recombination and DNA repair. Endonuclease that resolves HJ intermediates. Cleaves cruciform DNA by making single-stranded nicks across the HJ at symmetrical positions within the homologous arms, yielding a 5'-phosphate and a 3'-hydroxyl group; requires a central core of homology in the junction. The consensus cleavage sequence is 5'-(A/T)TT(C/G)-3'. Cleavage occurs on the 3'-side of the TT dinucleotide at the point of strand exchange. HJ branch migration catalyzed by RuvA-RuvB allows RuvC to scan DNA until it finds its consensus sequence, where it cleaves and resolves the cruciform DNA. The chain is Crossover junction endodeoxyribonuclease RuvC from Prochlorococcus marinus (strain MIT 9211).